Consider the following 312-residue polypeptide: Ribonuclease Z (312 aa).

Histidine 63, histidine 65, aspartate 67, histidine 68, histidine 141, aspartate 212, and histidine 270 together coordinate Zn(2+). The Proton acceptor role is filled by aspartate 67.

Belongs to the RNase Z family. Homodimer. It depends on Zn(2+) as a cofactor.

It catalyses the reaction Endonucleolytic cleavage of RNA, removing extra 3' nucleotides from tRNA precursor, generating 3' termini of tRNAs. A 3'-hydroxy group is left at the tRNA terminus and a 5'-phosphoryl group is left at the trailer molecule.. Functionally, zinc phosphodiesterase, which displays some tRNA 3'-processing endonuclease activity. Probably involved in tRNA maturation, by removing a 3'-trailer from precursor tRNA. This Latilactobacillus sakei subsp. sakei (strain 23K) (Lactobacillus sakei subsp. sakei) protein is Ribonuclease Z.